The following is a 449-amino-acid chain: Glutamyl-tRNA reductase (449 aa).

Substrate-binding positions include 49-52, Ser107, 112-114, and Gln118; these read TCNR and EPQ. Cys50 acts as the Nucleophile in catalysis. 187–192 serves as a coordination point for NADP(+); it reads GAGETI. The disordered stretch occupies residues 418–449; that stretch reads QLVERSSEGDDSQQAGADGGAARGDRRAAGGS. Over residues 440–449 the composition is skewed to basic and acidic residues; sequence RGDRRAAGGS.

Belongs to the glutamyl-tRNA reductase family. Homodimer.

The catalysed reaction is (S)-4-amino-5-oxopentanoate + tRNA(Glu) + NADP(+) = L-glutamyl-tRNA(Glu) + NADPH + H(+). It participates in porphyrin-containing compound metabolism; protoporphyrin-IX biosynthesis; 5-aminolevulinate from L-glutamyl-tRNA(Glu): step 1/2. Catalyzes the NADPH-dependent reduction of glutamyl-tRNA(Glu) to glutamate 1-semialdehyde (GSA). The polypeptide is Glutamyl-tRNA reductase (Halorhodospira halophila (strain DSM 244 / SL1) (Ectothiorhodospira halophila (strain DSM 244 / SL1))).